The sequence spans 104 residues: V-type ATP synthase subunit F (104 aa).

It belongs to the V-ATPase F subunit family.

Produces ATP from ADP in the presence of a proton gradient across the membrane. This chain is V-type ATP synthase subunit F, found in Thermus thermophilus (strain ATCC BAA-163 / DSM 7039 / HB27).